The following is a 284-amino-acid chain: 3-methyl-2-oxobutanoate hydroxymethyltransferase (284 aa).

Positions 44 and 83 each coordinate Mg(2+). Residues 44–45, Asp83, and Lys112 contribute to the 3-methyl-2-oxobutanoate site; that span reads DS. Glu114 serves as a coordination point for Mg(2+). The active-site Proton acceptor is the Glu181.

This sequence belongs to the PanB family. In terms of assembly, homodecamer; pentamer of dimers. Requires Mg(2+) as cofactor.

It is found in the cytoplasm. It carries out the reaction 3-methyl-2-oxobutanoate + (6R)-5,10-methylene-5,6,7,8-tetrahydrofolate + H2O = 2-dehydropantoate + (6S)-5,6,7,8-tetrahydrofolate. It participates in cofactor biosynthesis; coenzyme A biosynthesis. Its activity is regulated as follows. Neither activated nor inhibited by coenzyme A. Catalyzes the reversible reaction in which hydroxymethyl group from 5,10-methylenetetrahydrofolate is transferred onto alpha-ketoisovalerate to form ketopantoate. The chain is 3-methyl-2-oxobutanoate hydroxymethyltransferase from Thermococcus kodakarensis (strain ATCC BAA-918 / JCM 12380 / KOD1) (Pyrococcus kodakaraensis (strain KOD1)).